Reading from the N-terminus, the 471-residue chain is Trigger factor (471 aa).

In terms of domain architecture, PPIase FKBP-type spans 166-245 (DDFITIDINA…LTAVKVRELP (80 aa)). A disordered region spans residues 442–471 (AAGVTGEDDDTEAEEERVTVSADDPGAARF). A compositionally biased stretch (acidic residues) spans 447–456 (GEDDDTEAEE).

This sequence belongs to the FKBP-type PPIase family. Tig subfamily.

It is found in the cytoplasm. It carries out the reaction [protein]-peptidylproline (omega=180) = [protein]-peptidylproline (omega=0). In terms of biological role, involved in protein export. Acts as a chaperone by maintaining the newly synthesized protein in an open conformation. Functions as a peptidyl-prolyl cis-trans isomerase. This Renibacterium salmoninarum (strain ATCC 33209 / DSM 20767 / JCM 11484 / NBRC 15589 / NCIMB 2235) protein is Trigger factor.